The primary structure comprises 304 residues: Putative S-adenosyl-L-methionine-dependent methyltransferase MMAR_1057 (304 aa).

Residues Asp130 and 159-160 (DL) each bind S-adenosyl-L-methionine.

It belongs to the UPF0677 family.

Functionally, exhibits S-adenosyl-L-methionine-dependent methyltransferase activity. This is Putative S-adenosyl-L-methionine-dependent methyltransferase MMAR_1057 from Mycobacterium marinum (strain ATCC BAA-535 / M).